Consider the following 430-residue polypeptide: Functional amyloid transporter FapF (430 aa).

Residues 1–24 (MHRSLSLRAVVCLSTLLPASLLYA) form the signal peptide. The Periplasmic portion of the chain corresponds to 25 to 131 (APDVDIETLK…EASGFFGNGK (107 aa)). Residues 29 to 64 (DIETLKQELLELKQRYEAQQKALAVLEQRVRQVEDQ) are a coiled coil. Residues 62–114 (EDQPATPAPKRLAKSPADFKQSGSTVAASSGTGGATGGSSYGQSLKDDSEPAQ) are disordered. Over residues 92 to 101 (GTGGATGGSS) the composition is skewed to gly residues. Residues 113–125 (AQSVSNLYNEASG) are alpha helical plug. Residues 132–142 (FSFETGITYAR) form a beta stranded membrane-spanning segment. The Extracellular segment spans residues 143-172 (YDARQLTLNGFLALDSIFLGNINLDRIKAD). A beta stranded transmembrane segment spans residues 173-183 (NWTLDLTGRYN). The Periplasmic segment spans residues 184 to 189 (LDNRWQ). A beta stranded transmembrane segment spans residues 190-198 (FDVNVPVVY). At 199-224 (RESTYQSGGASGGDPQATSEESVSRD) the chain is on the extracellular side. A disordered region spans residues 203–223 (YQSGGASGGDPQATSEESVSR). Residues 225-238 (PTIGDVNFGIAYKF) form a beta stranded membrane-spanning segment. Over 239–246 (LDESATMP) the chain is Periplasmic. Residues 247–256 (DAVVSVRVKA) form a beta stranded membrane-spanning segment. Residues 257-288 (PTGKEPFGIKLVRSTANDNLYVPESLPTGNGV) lie on the Extracellular side of the membrane. A beta stranded transmembrane segment spans residues 289 to 298 (WSITPGLSLV). Topologically, residues 299–304 (KTFDPA) are periplasmic. Residues 305–314 (VLFGSVSYTH) traverse the membrane as a beta stranded segment. The Extracellular segment spans residues 315–339 (NLEDSFDDISSDVNQKVGGKVRLGD). Residues 340 to 348 (SFQFGVGVA) form a beta stranded membrane-spanning segment. Over 349–356 (FALNERMS) the chain is Periplasmic. The beta stranded transmembrane segment at 357-365 (MSFSVSDLI) threads the bilayer. Residues 366 to 386 (QRKSKLKPDGGGWQSIVSSDA) are Extracellular-facing. Residues 387–397 (NAGYFNVGMTI) form a beta stranded membrane-spanning segment. Residues 398–404 (AASENLT) lie on the Periplasmic side of the membrane. A beta stranded membrane pass occupies residues 405–412 (IVPNLAIG). Residues 413–419 (MTDDAPD) are Extracellular-facing. Residues 420–428 (FTFSLKFPY) traverse the membrane as a beta stranded segment. Topologically, residues 429–430 (YF) are periplasmic.

It belongs to the amyloid transporter (TC 9.B.153) family. In terms of assembly, homotrimer.

Its subcellular location is the cell outer membrane. Transports fibril components across the outer membrane. Upon overexpression of the endogenous six-gene locus (fapA-fapF) in situ cells form large clumps during liquid growth, make large amounts of biofilm and produce amyloid fibrils. Expression of the 6 gene operon in E.coli strain BL21(DE3) induces flocculation and biofilm formation with copious extracellular fibrils. This chain is Functional amyloid transporter FapF, found in Pseudomonas fluorescens.